The sequence spans 354 residues: Homoserine O-succinyltransferase (354 aa).

The Acyl-thioester intermediate role is filled by C146. Residues K167 and S196 each contribute to the substrate site. Residue H239 is the Proton acceptor of the active site. The active site involves E241. R253 contacts substrate.

Belongs to the MetA family.

It is found in the cytoplasm. It carries out the reaction L-homoserine + succinyl-CoA = O-succinyl-L-homoserine + CoA. Its pathway is amino-acid biosynthesis; L-methionine biosynthesis via de novo pathway; O-succinyl-L-homoserine from L-homoserine: step 1/1. Its function is as follows. Transfers a succinyl group from succinyl-CoA to L-homoserine, forming succinyl-L-homoserine. This chain is Homoserine O-succinyltransferase, found in Methylobacter tundripaludum (strain ATCC BAA-1195 / DSM 17260 / SV96).